A 245-amino-acid chain; its full sequence is MKSAAILALLAQALAVTAQPVEGDRTPGTRTLDLPNFPGGSVPTRGVEKRADLPPDNGGGNAPDPDKVHIVGVTYGGTGCPDGTVSHVLSDDRQIMTLIFDQYVAQIGPGVNTKENRKNCQLNINLRYPGGFQFSVFSADYRGYANLEKGVSGTQKSIYYFSGQTEQTSTSTTWKGPIDKDYILHDEANQTSTVWSPCGANGALNINSQVRLTATDRNARGILTNDSVDTSFKQIVHVRWQQCTN.

A signal peptide spans 1-18 (MKSAAILALLAQALAVTA). The tract at residues 21 to 66 (VEGDRTPGTRTLDLPNFPGGSVPTRGVEKRADLPPDNGGGNAPDPD) is disordered. N-linked (GlcNAc...) asparagine glycosylation is found at Asn189 and Asn225.

Its subcellular location is the secreted. This is an uncharacterized protein from Arthroderma benhamiae (strain ATCC MYA-4681 / CBS 112371) (Trichophyton mentagrophytes).